Reading from the N-terminus, the 143-residue chain is Nucleoside diphosphate kinase (143 aa).

Residues K11, F59, R87, T93, R104, and N114 each contribute to the ATP site. H117 acts as the Pros-phosphohistidine intermediate in catalysis.

It belongs to the NDK family. Homotetramer. Mg(2+) serves as cofactor.

The protein localises to the cytoplasm. It carries out the reaction a 2'-deoxyribonucleoside 5'-diphosphate + ATP = a 2'-deoxyribonucleoside 5'-triphosphate + ADP. The catalysed reaction is a ribonucleoside 5'-diphosphate + ATP = a ribonucleoside 5'-triphosphate + ADP. Major role in the synthesis of nucleoside triphosphates other than ATP. The ATP gamma phosphate is transferred to the NDP beta phosphate via a ping-pong mechanism, using a phosphorylated active-site intermediate. The sequence is that of Nucleoside diphosphate kinase from Azotobacter vinelandii (strain DJ / ATCC BAA-1303).